The chain runs to 483 residues: Malonate-semialdehyde dehydrogenase 2 (483 aa).

NAD(+) is bound by residues phenylalanine 152, lysine 176, glutamate 179, arginine 180, and serine 229. Catalysis depends on cysteine 284, which acts as the Nucleophile. Position 384 (glutamate 384) interacts with NAD(+).

Belongs to the aldehyde dehydrogenase family. IolA subfamily. As to quaternary structure, homotetramer.

The enzyme catalyses 3-oxopropanoate + NAD(+) + CoA + H2O = hydrogencarbonate + acetyl-CoA + NADH + H(+). It catalyses the reaction 2-methyl-3-oxopropanoate + NAD(+) + CoA + H2O = propanoyl-CoA + hydrogencarbonate + NADH + H(+). It participates in polyol metabolism; myo-inositol degradation into acetyl-CoA; acetyl-CoA from myo-inositol: step 7/7. Its function is as follows. Catalyzes the oxidation of malonate semialdehyde (MSA) and methylmalonate semialdehyde (MMSA) into acetyl-CoA and propanoyl-CoA, respectively. Is involved in a myo-inositol catabolic pathway. Bicarbonate, and not CO2, is the end-product of the enzymatic reaction. This chain is Malonate-semialdehyde dehydrogenase 2, found in Geobacillus thermodenitrificans (strain NG80-2).